Reading from the N-terminus, the 315-residue chain is Protoheme IX farnesyltransferase (315 aa).

9 helical membrane passes run 38–58, 62–82, 111–131, 132–152, 159–179, 184–204, 233–253, 255–275, and 293–313; these read IIEL…QGVP, LVLL…ALNM, LVFG…TVNW, LSAW…TMIL, NIVW…SAVT, WAPV…YWPL, IVIY…LGYT, WFYT…AHGL, and LFHW…VDPF.

Belongs to the UbiA prenyltransferase family. Protoheme IX farnesyltransferase subfamily.

The protein resides in the cell membrane. It carries out the reaction heme b + (2E,6E)-farnesyl diphosphate + H2O = Fe(II)-heme o + diphosphate. The protein operates within porphyrin-containing compound metabolism; heme O biosynthesis; heme O from protoheme: step 1/1. Converts heme B (protoheme IX) to heme O by substitution of the vinyl group on carbon 2 of heme B porphyrin ring with a hydroxyethyl farnesyl side group. This Streptomyces coelicolor (strain ATCC BAA-471 / A3(2) / M145) protein is Protoheme IX farnesyltransferase.